Reading from the N-terminus, the 333-residue chain is PRKC apoptosis WT1 regulator protein (333 aa).

Low complexity-rich tracts occupy residues 1–14 (MATG…STTT), 33–51 (PAGP…PAGS), 66–80 (GPAG…APGA), and 105–116 (PSAAAASGAPGS). The tract at residues 1 to 262 (MATGGYRSGG…ASFSSSSTLE (262 aa)) is disordered. The B30.2/SPRY domain-binding motif motif lies at 62–66 (ELNHG). The short motif at 138–154 (RKGKGQIEKRKLREKRR) is the Nuclear localization signal element. Residues 138–196 (RKGKGQIEKRKLREKRRSTGVVNIPAAECLDEYEDDEAGQKERKREDAITQQNTIQNEA) are selective for apoptosis induction in cancer cells (SAC). A Phosphothreonine; by PKA modification is found at Thr156. Over residues 175-185 (AGQKERKREDA) the composition is skewed to basic and acidic residues. Residues 186-196 (ITQQNTIQNEA) show a composition bias toward polar residues. Position 224 is a phosphoserine (Ser224). Basic and acidic residues predominate over residues 235 to 248 (PRTDRSGFSRHNRD). Positions 255 to 333 (FSSSSTLEKR…LLKVVGQLTR (79 aa)) form a coiled coil. Residues 293 to 333 (IGKLKEEIDLLNRDLDDMEDENEQLKQENKTLLKVVGQLTR) form a leucine-zipper region.

As to quaternary structure, homooligomer. Interacts (via the C-terminal region) with WT1. Interacts with THAP1. Interacts with AATF. Interacts with BACE1. Interacts with SPSB1 (via B30.2/SPRY domain); this interaction is direct and occurs in association with the Elongin BC complex. Interacts with SPSB2 (via B30.2/SPRY domain); this interaction occurs in association with the Elongin BC complex. Interacts with SPSB4 (via B30.2/SPRY domain); this interaction occurs in association with the Elongin BC complex. Component of a ternary complex composed of SQSTM1 and PRKCZ. Interacts with actin. Post-translationally, preferentially phosphorylated at the Thr-156 by PKC in cancer cells.

The protein localises to the cytoplasm. It localises to the nucleus. Functionally, pro-apoptotic protein capable of selectively inducing apoptosis in cancer cells, sensitizing the cells to diverse apoptotic stimuli and causing regression of tumors in animal models. Induces apoptosis in certain cancer cells by activation of the Fas prodeath pathway and coparallel inhibition of NF-kappa-B transcriptional activity. Inhibits the transcriptional activation and augments the transcriptional repression mediated by WT1. Down-regulates the anti-apoptotic protein BCL2 via its interaction with WT1. Also seems to be a transcriptional repressor by itself. May be directly involved in regulating the amyloid precursor protein (APP) cleavage activity of BACE1. The protein is PRKC apoptosis WT1 regulator protein (Pawr) of Mus musculus (Mouse).